Reading from the N-terminus, the 122-residue chain is Large ribosomal subunit protein uL14 (122 aa).

The protein belongs to the universal ribosomal protein uL14 family. Part of the 50S ribosomal subunit. Forms a cluster with proteins L3 and L19. In the 70S ribosome, L14 and L19 interact and together make contacts with the 16S rRNA in bridges B5 and B8.

In terms of biological role, binds to 23S rRNA. Forms part of two intersubunit bridges in the 70S ribosome. The polypeptide is Large ribosomal subunit protein uL14 (Orientia tsutsugamushi (strain Ikeda) (Rickettsia tsutsugamushi)).